Here is a 245-residue protein sequence, read N- to C-terminus: NAD-dependent protein deacylase (245 aa).

The 237-residue stretch at 1 to 237 folds into the Deacetylase sirtuin-type domain; the sequence is MNFPYRNIVV…PKLVEELLAH (237 aa). NAD(+) is bound at residue 13–32; it reads GAGISAESGIQTFRAQDGLW. Residues Y57 and R60 each contribute to the substrate site. Residue 94–97 participates in NAD(+) binding; sequence QNID. The active-site Proton acceptor is the H112. Zn(2+) contacts are provided by C120 and C139. NAD(+)-binding positions include 179 to 181, 205 to 207, and A223; these read GTS and NLE.

It belongs to the sirtuin family. Class III subfamily. Requires Zn(2+) as cofactor.

The protein localises to the cytoplasm. The catalysed reaction is N(6)-acetyl-L-lysyl-[protein] + NAD(+) + H2O = 2''-O-acetyl-ADP-D-ribose + nicotinamide + L-lysyl-[protein]. It catalyses the reaction N(6)-succinyl-L-lysyl-[protein] + NAD(+) + H2O = 2''-O-succinyl-ADP-D-ribose + nicotinamide + L-lysyl-[protein]. Its function is as follows. NAD-dependent lysine deacetylase and desuccinylase that specifically removes acetyl and succinyl groups on target proteins. Modulates the activities of several proteins which are inactive in their acylated form. In Vibrio vulnificus (strain CMCP6), this protein is NAD-dependent protein deacylase.